Consider the following 128-residue polypeptide: Flagellar basal body rod protein FlgB (128 aa).

This sequence belongs to the flagella basal body rod proteins family. The basal body constitutes a major portion of the flagellar organelle and consists of a number of rings mounted on a central rod. In Gram-negative bacteria, at least four rings, L, P, S and M are present, whereas Gram-positive bacteria lack the L and P rings. The rod consists of about 26 subunits of FlgG in the distal portion, and FlgB, FlgC and FlgF build up the proximal portion of the rod with about 6 subunits each. Rod assembly occurs by export via the flagellum-specific pathway of its constituent proteins and by their incorporation into the rod structure in the probable order of FlgB, FlgC, FlgF and FlgG. Another protein, FliE, also assembles onto the stable rod structure.

The protein resides in the bacterial flagellum basal body. Structural component of flagellum, the bacterial motility apparatus. Part of the rod structure of flagellar basal body. The chain is Flagellar basal body rod protein FlgB from Cereibacter sphaeroides (Rhodobacter sphaeroides).